A 430-amino-acid polypeptide reads, in one-letter code: Histidine--tRNA ligase (430 aa).

This sequence belongs to the class-II aminoacyl-tRNA synthetase family. In terms of assembly, homodimer.

Its subcellular location is the cytoplasm. The enzyme catalyses tRNA(His) + L-histidine + ATP = L-histidyl-tRNA(His) + AMP + diphosphate + H(+). The protein is Histidine--tRNA ligase of Anaplasma marginale (strain Florida).